The chain runs to 411 residues: Protein PHLOEM PROTEIN 2-LIKE A5 (411 aa).

The 138-residue stretch at 20 to 157 (TGPQVFINFR…KWTEALFSVC (138 aa)) folds into the TIR domain. E94 is a catalytic residue.

It catalyses the reaction NAD(+) + H2O = ADP-D-ribose + nicotinamide + H(+). This chain is Protein PHLOEM PROTEIN 2-LIKE A5 (PP2A5), found in Arabidopsis thaliana (Mouse-ear cress).